The primary structure comprises 388 residues: Protochlorophyllide reductase A, chloroplastic (388 aa).

The N-terminal 74 residues, 1–74 (MALQLLPSTL…SPSGKKTLRQ (74 aa)), are a transit peptide targeting the chloroplast. Residues 48-68 (VATAPSPVTTSPGSTASSPSG) show a composition bias toward low complexity. The interval 48–69 (VATAPSPVTTSPGSTASSPSGK) is disordered.

Belongs to the short-chain dehydrogenases/reductases (SDR) family. POR subfamily.

It is found in the plastid. Its subcellular location is the chloroplast. The enzyme catalyses chlorophyllide a + NADP(+) = protochlorophyllide a + NADPH + H(+). The protein operates within porphyrin-containing compound metabolism; chlorophyll biosynthesis. Phototransformation of protochlorophyllide (Pchlide) to chlorophyllide (Chlide). This is Protochlorophyllide reductase A, chloroplastic (PORA) from Hordeum vulgare (Barley).